Reading from the N-terminus, the 402-residue chain is Nodulation protein E (402 aa).

The region spanning 2–401 (DRRVVITGIG…GMNAVLAFRQ (400 aa)) is the Ketosynthase family 3 (KS3) domain. Catalysis depends on for beta-ketoacyl synthase activity residues C162, H294, and H331. The chain crosses the membrane as a helical span at residues 329–348 (HAHCLGAASALEMIACVMAI).

The protein belongs to the thiolase-like superfamily. Beta-ketoacyl-ACP synthases family.

It localises to the cell inner membrane. Functionally, proposed to synthesize NOD factor fatty acyl chain. Involved in the synthesis of a highly unsaturated fatty acid moiety, which forms part of a lipo-oligosaccharide that is responsible for host specificity. This is Nodulation protein E (nodE) from Rhizobium sp. (strain N33).